Consider the following 418-residue polypeptide: Cyclin-A1 (418 aa).

It belongs to the cyclin family. Cyclin AB subfamily. In terms of assembly, interacts with the CDK1 and the CDK2 protein kinases to form a serine/threonine kinase holoenzyme complex. The cyclin subunit imparts substrate specificity to the complex.

It is found in the nucleus. Functionally, may be involved in the control of the cell cycle at the G1/S (start) and G2/M (mitosis) transitions. The protein is Cyclin-A1 (ccna1) of Xenopus laevis (African clawed frog).